Reading from the N-terminus, the 1083-residue chain is Carbamoyl phosphate synthase large chain (1083 aa).

Residues 1–402 (MPRRDDIKKI…SFQKALRGLE (402 aa)) form a carboxyphosphate synthetic domain region. The ATP site is built by Arg-129, Arg-169, Gly-175, Gly-176, Glu-208, Ile-210, Glu-215, Gly-241, Val-242, His-243, Gln-285, and Glu-299. The ATP-grasp 1 domain occupies 133–328 (KQAMDKIGLD…IAKIAAKLAV (196 aa)). Positions 285, 299, and 301 each coordinate Mg(2+). Gln-285, Glu-299, and Asn-301 together coordinate Mn(2+). Residues 403-557 (VGAFGFGSDP…YSTYESETEV (155 aa)) form an oligomerization domain region. Residues 558 to 944 (PAKGDKKRVV…AFAKSQLAAG (387 aa)) are carbamoyl phosphate synthetic domain. One can recognise an ATP-grasp 2 domain in the interval 683–878 (SSLIDELGLR…VANLATKVMA (196 aa)). Arg-719, Arg-758, Leu-760, Glu-765, Gly-790, Val-791, His-792, Ser-793, Gln-833, and Glu-849 together coordinate ATP. Mg(2+)-binding residues include Gln-833, Glu-849, and Asn-851. Residues Gln-833, Glu-849, and Asn-851 each coordinate Mn(2+). The 139-residue stretch at 945–1083 (TVLPESGKIF…SLQRRYAQNV (139 aa)) folds into the MGS-like domain. The tract at residues 945 to 1083 (TVLPESGKIF…SLQRRYAQNV (139 aa)) is allosteric domain.

It belongs to the CarB family. In terms of assembly, composed of two chains; the small (or glutamine) chain promotes the hydrolysis of glutamine to ammonia, which is used by the large (or ammonia) chain to synthesize carbamoyl phosphate. Tetramer of heterodimers (alpha,beta)4. The cofactor is Mg(2+). Mn(2+) is required as a cofactor.

The catalysed reaction is hydrogencarbonate + L-glutamine + 2 ATP + H2O = carbamoyl phosphate + L-glutamate + 2 ADP + phosphate + 2 H(+). It catalyses the reaction hydrogencarbonate + NH4(+) + 2 ATP = carbamoyl phosphate + 2 ADP + phosphate + 2 H(+). It participates in amino-acid biosynthesis; L-arginine biosynthesis; carbamoyl phosphate from bicarbonate: step 1/1. It functions in the pathway pyrimidine metabolism; UMP biosynthesis via de novo pathway; (S)-dihydroorotate from bicarbonate: step 1/3. Large subunit of the glutamine-dependent carbamoyl phosphate synthetase (CPSase). CPSase catalyzes the formation of carbamoyl phosphate from the ammonia moiety of glutamine, carbonate, and phosphate donated by ATP, constituting the first step of 2 biosynthetic pathways, one leading to arginine and/or urea and the other to pyrimidine nucleotides. The large subunit (synthetase) binds the substrates ammonia (free or transferred from glutamine from the small subunit), hydrogencarbonate and ATP and carries out an ATP-coupled ligase reaction, activating hydrogencarbonate by forming carboxy phosphate which reacts with ammonia to form carbamoyl phosphate. This Rhodopirellula baltica (strain DSM 10527 / NCIMB 13988 / SH1) protein is Carbamoyl phosphate synthase large chain.